The primary structure comprises 335 residues: MEEIKFNQIGVSFKGSGSYVPDQILTNEEISQKVDTSDEWIKSRTGISERRISRVEDNVADMGYKAALTAIEMANWDIKTIDLIVLATSTPHDLFGSAPSIQSKLGASNAVAFDLTAACSGFLFALITTSQFLKAGNFKRALVVGADQLSSFVDWNDRRSCILFGDGAGALAIEATNEFDNFIGFDMRTDGERGCFLNLPSKNNEDSIIDNIEFLSGGFSPIQMNGQEVYKFAVKEVPIILDKLFKKTNYSSDEVDWLILHQANQRILDSVGDRLKIPREKILSNLEKYGNTSAATIPLMIDEAIRNHSIKQNDIIATSGFGAGLSWGAALIKWG.

Active-site residues include C119 and H261. The segment at Q262–R266 is ACP-binding. N291 is a catalytic residue.

This sequence belongs to the thiolase-like superfamily. FabH family. Homodimer.

Its subcellular location is the cytoplasm. The enzyme catalyses malonyl-[ACP] + acetyl-CoA + H(+) = 3-oxobutanoyl-[ACP] + CO2 + CoA. It functions in the pathway lipid metabolism; fatty acid biosynthesis. In terms of biological role, catalyzes the condensation reaction of fatty acid synthesis by the addition to an acyl acceptor of two carbons from malonyl-ACP. Catalyzes the first condensation reaction which initiates fatty acid synthesis and may therefore play a role in governing the total rate of fatty acid production. Possesses both acetoacetyl-ACP synthase and acetyl transacylase activities. Its substrate specificity determines the biosynthesis of branched-chain and/or straight-chain of fatty acids. The sequence is that of Beta-ketoacyl-[acyl-carrier-protein] synthase III from Prochlorococcus marinus (strain MIT 9215).